The sequence spans 36 residues: Thrombin (36 aa).

The Peptidase S1 domain occupies 19 to 36; sequence IVKGIDAEVASAPMQVML.

It belongs to the peptidase S1 family. In terms of assembly, forms a heterodimer with SERPINA5. Post-translationally, the gamma-carboxyglutamyl residues, which bind calcium ions, result from the carboxylation of glutamyl residues by a microsomal enzyme, the vitamin K-dependent carboxylase. The modified residues are necessary for the calcium-dependent interaction with a negatively charged phospholipid surface, which is essential for the conversion of prothrombin to thrombin. In terms of processing, N-glycosylated. In terms of tissue distribution, expressed by the liver and secreted in plasma.

It is found in the secreted. The catalysed reaction is Selective cleavage of Arg-|-Gly bonds in fibrinogen to form fibrin and release fibrinopeptides A and B.. Inhibited by SERPINA5. In terms of biological role, thrombin, which cleaves bonds after Arg and Lys, converts fibrinogen to fibrin and activates factors V, VII, VIII, XIII, and, in complex with thrombomodulin, protein C. Functions in blood homeostasis, inflammation and wound healing. This Salmo salar (Atlantic salmon) protein is Thrombin.